Reading from the N-terminus, the 194-residue chain is Putative manganese efflux pump MntP (194 aa).

A run of 6 helical transmembrane segments spans residues 3 to 23 (PITILLIGIAMSTDAFAAAIG), 37 to 57 (LYVAVIFGVIETATPIAGWLL), 65 to 85 (IATFDHWIAFGLLSGLGIHMI), 112 to 132 (LAATALATSIDAAAIGISLAF), 139 to 159 (IVAAVIGLCTFTMVIFGVMLG), and 170 to 190 (AEIVGGIILIIVGSTILYEHL).

The protein belongs to the MntP (TC 9.B.29) family.

It is found in the cell inner membrane. Its function is as follows. Probably functions as a manganese efflux pump. The sequence is that of Putative manganese efflux pump MntP from Xylella fastidiosa (strain 9a5c).